A 555-amino-acid chain; its full sequence is DNA ligase (555 aa).

E247 contacts ATP. The N6-AMP-lysine intermediate role is filled by K249. R254, R269, E298, F337, R411, and K417 together coordinate ATP.

This sequence belongs to the ATP-dependent DNA ligase family. Mg(2+) serves as cofactor.

The catalysed reaction is ATP + (deoxyribonucleotide)n-3'-hydroxyl + 5'-phospho-(deoxyribonucleotide)m = (deoxyribonucleotide)n+m + AMP + diphosphate.. In terms of biological role, DNA ligase that seals nicks in double-stranded DNA during DNA replication, DNA recombination and DNA repair. The chain is DNA ligase from Archaeoglobus fulgidus (strain ATCC 49558 / DSM 4304 / JCM 9628 / NBRC 100126 / VC-16).